Consider the following 475-residue polypeptide: Ribulose bisphosphate carboxylase large chain (475 aa).

A propeptide spanning residues Met-1–Ser-2 is cleaved from the precursor. Pro-3 is subject to N-acetylproline. Lys-14 bears the N6,N6,N6-trimethyllysine mark. The substrate site is built by Asn-123 and Thr-173. The Proton acceptor role is filled by Lys-175. Lys-177 provides a ligand contact to substrate. Residues Lys-201, Asp-203, and Glu-204 each coordinate Mg(2+). Residue Lys-201 is modified to N6-carboxylysine. His-294 functions as the Proton acceptor in the catalytic mechanism. Arg-295, His-327, and Ser-379 together coordinate substrate.

It belongs to the RuBisCO large chain family. Type I subfamily. In terms of assembly, heterohexadecamer of 8 large chains and 8 small chains; disulfide-linked. The disulfide link is formed within the large subunit homodimers. Mg(2+) serves as cofactor. In terms of processing, the disulfide bond which can form in the large chain dimeric partners within the hexadecamer appears to be associated with oxidative stress and protein turnover.

Its subcellular location is the plastid. The protein resides in the chloroplast. The enzyme catalyses 2 (2R)-3-phosphoglycerate + 2 H(+) = D-ribulose 1,5-bisphosphate + CO2 + H2O. It catalyses the reaction D-ribulose 1,5-bisphosphate + O2 = 2-phosphoglycolate + (2R)-3-phosphoglycerate + 2 H(+). In terms of biological role, ruBisCO catalyzes two reactions: the carboxylation of D-ribulose 1,5-bisphosphate, the primary event in carbon dioxide fixation, as well as the oxidative fragmentation of the pentose substrate in the photorespiration process. Both reactions occur simultaneously and in competition at the same active site. The sequence is that of Ribulose bisphosphate carboxylase large chain from Pseudolarix amabilis (Golden larch).